The chain runs to 356 residues: tRNA N6-adenosine threonylcarbamoyltransferase (356 aa).

Positions 115 and 119 each coordinate Fe cation. Substrate is bound by residues 138 to 142, D171, G184, and N277; that span reads LVSGG. D305 is a binding site for Fe cation.

Belongs to the KAE1 / TsaD family. The cofactor is Fe(2+).

Its subcellular location is the cytoplasm. The enzyme catalyses L-threonylcarbamoyladenylate + adenosine(37) in tRNA = N(6)-L-threonylcarbamoyladenosine(37) in tRNA + AMP + H(+). Required for the formation of a threonylcarbamoyl group on adenosine at position 37 (t(6)A37) in tRNAs that read codons beginning with adenine. Is involved in the transfer of the threonylcarbamoyl moiety of threonylcarbamoyl-AMP (TC-AMP) to the N6 group of A37, together with TsaE and TsaB. TsaD likely plays a direct catalytic role in this reaction. This Polaromonas naphthalenivorans (strain CJ2) protein is tRNA N6-adenosine threonylcarbamoyltransferase.